The sequence spans 150 residues: D-aminoacyl-tRNA deacylase (150 aa).

The Gly-cisPro motif, important for rejection of L-amino acids signature appears at 133–134; that stretch reads GP.

The protein belongs to the DTD family. Homodimer.

The protein resides in the cytoplasm. It catalyses the reaction glycyl-tRNA(Ala) + H2O = tRNA(Ala) + glycine + H(+). The catalysed reaction is a D-aminoacyl-tRNA + H2O = a tRNA + a D-alpha-amino acid + H(+). Its function is as follows. An aminoacyl-tRNA editing enzyme that deacylates mischarged D-aminoacyl-tRNAs. Also deacylates mischarged glycyl-tRNA(Ala), protecting cells against glycine mischarging by AlaRS. Acts via tRNA-based rather than protein-based catalysis; rejects L-amino acids rather than detecting D-amino acids in the active site. By recycling D-aminoacyl-tRNA to D-amino acids and free tRNA molecules, this enzyme counteracts the toxicity associated with the formation of D-aminoacyl-tRNA entities in vivo and helps enforce protein L-homochirality. This Micrococcus luteus (strain ATCC 4698 / DSM 20030 / JCM 1464 / CCM 169 / CCUG 5858 / IAM 1056 / NBRC 3333 / NCIMB 9278 / NCTC 2665 / VKM Ac-2230) (Micrococcus lysodeikticus) protein is D-aminoacyl-tRNA deacylase.